The following is a 206-amino-acid chain: Large ribosomal subunit protein uL3 (206 aa).

The disordered stretch occupies residues 122 to 154 (VVKRHGHAGGPGGHGSRFHRHPGSMGANSTPSR).

The protein belongs to the universal ribosomal protein uL3 family. As to quaternary structure, part of the 50S ribosomal subunit. Forms a cluster with proteins L14 and L19.

One of the primary rRNA binding proteins, it binds directly near the 3'-end of the 23S rRNA, where it nucleates assembly of the 50S subunit. This is Large ribosomal subunit protein uL3 from Leptospira borgpetersenii serovar Hardjo-bovis (strain JB197).